Consider the following 458-residue polypeptide: MAGSPSRAAGRRLQLPLLCLFLQGATAVLFAVFVRYNHKTDAALWHRGNHSNADNEFYFRYPSFQDVHAMVFVGFGFLMVFLQRYGFSSVGFTFLLAAFALQWSTLVQGFLHSFHSGHIHVGVESMINADFCAGAVLISFGAVLGKTGPAQLLLMALLEVVLFGINEFVLLHLLGVRDAGGSMTIHTFGAYFGLVLSRVLYRPQLEKSKHRQGSVYHSDLFAMIGTIFLWIFWPSFNSALTALGAGQHRTALNTYYSLAASTLGTFALSALVGEDGRLDMVHIQNAALAGGVVVGTSSEMMLTPFGALAAGFLAGTVSTLGYKFFTPILESKFKVQDTCGVHNLHGMPGVLGALLGVLVAGLATHEAYGDGLESVFPLIAEGQRSATSQAMLQLFGLFVTLMFASVGGGLGGLLLKLPFLDSPPDSQCYEDQVHWQVPGEHEDEAQRPLRVEEADTQA.

Residues 1-13 are Cytoplasmic-facing; it reads MAGSPSRAAGRRL. A helical transmembrane segment spans residues 14 to 34; the sequence is QLPLLCLFLQGATAVLFAVFV. At 35 to 61 the chain is on the extracellular side; sequence RYNHKTDAALWHRGNHSNADNEFYFRY. Residue N49 is glycosylated (N-linked (GlcNAc...) asparagine). Residues 62–82 traverse the membrane as a helical segment; that stretch reads PSFQDVHAMVFVGFGFLMVFL. The Cytoplasmic portion of the chain corresponds to 83 to 86; the sequence is QRYG. Residues 87–107 traverse the membrane as a helical segment; it reads FSSVGFTFLLAAFALQWSTLV. Residues 108–124 lie on the Extracellular side of the membrane; that stretch reads QGFLHSFHSGHIHVGVE. The chain crosses the membrane as a helical span at residues 125 to 145; the sequence is SMINADFCAGAVLISFGAVLG. The Cytoplasmic segment spans residues 146–149; that stretch reads KTGP. A helical membrane pass occupies residues 150–170; it reads AQLLLMALLEVVLFGINEFVL. At 171-178 the chain is on the extracellular side; the sequence is LHLLGVRD. A helical membrane pass occupies residues 179 to 201; it reads AGGSMTIHTFGAYFGLVLSRVLY. Residues 202–219 are Cytoplasmic-facing; that stretch reads RPQLEKSKHRQGSVYHSD. A helical membrane pass occupies residues 220–240; that stretch reads LFAMIGTIFLWIFWPSFNSAL. Residues 241-251 are Extracellular-facing; it reads TALGAGQHRTA. Residues 252–272 traverse the membrane as a helical segment; it reads LNTYYSLAASTLGTFALSALV. Topologically, residues 273-282 are cytoplasmic; it reads GEDGRLDMVH. Residues 283-303 form a helical membrane-spanning segment; sequence IQNAALAGGVVVGTSSEMMLT. Residue P304 is a topological domain, extracellular. The chain crosses the membrane as a helical span at residues 305–325; that stretch reads FGALAAGFLAGTVSTLGYKFF. Topologically, residues 326–346 are cytoplasmic; the sequence is TPILESKFKVQDTCGVHNLHG. The helical transmembrane segment at 347–367 threads the bilayer; the sequence is MPGVLGALLGVLVAGLATHEA. Residues 368-393 are Extracellular-facing; the sequence is YGDGLESVFPLIAEGQRSATSQAMLQ. The chain crosses the membrane as a helical span at residues 394-414; sequence LFGLFVTLMFASVGGGLGGLL. Over 415–458 the chain is Cytoplasmic; sequence LKLPFLDSPPDSQCYEDQVHWQVPGEHEDEAQRPLRVEEADTQA. Residues 416 to 424 are interaction with ANK3; it reads KLPFLDSPP. The Basolateral sorting signal motif lies at 429–432; it reads YEDQ. The segment at 439-458 is disordered; sequence GEHEDEAQRPLRVEEADTQA. The span at 444–458 shows a compositional bias: basic and acidic residues; that stretch reads EAQRPLRVEEADTQA.

The protein belongs to the ammonium transporter (TC 2.A.49) family. Rh subfamily. Interacts (via C-terminus) with ANK2 and ANK3; required for targeting to the basolateral membrane. N-glycosylated.

It is found in the cell membrane. Its subcellular location is the basolateral cell membrane. The enzyme catalyses NH4(+)(in) = NH4(+)(out). The catalysed reaction is methylamine(out) = methylamine(in). It catalyses the reaction CO2(out) = CO2(in). In terms of biological role, ammonium transporter involved in the maintenance of acid-base homeostasis. Transports ammonium and its related derivative methylammonium across the basolateral plasma membrane of epithelial cells likely contributing to renal transepithelial ammonia transport and ammonia metabolism. May transport either NH4(+) or NH3 ammonia species predominantly mediating an electrogenic NH4(+) transport. May act as a CO2 channel providing for renal acid secretion. The sequence is that of Ammonium transporter Rh type B (RHBG) from Macaca mulatta (Rhesus macaque).